The following is a 180-amino-acid chain: Endogenous alpha-amylase/subtilisin inhibitor (180 aa).

Disulfide bonds link cysteine 42-cysteine 89 and cysteine 143-cysteine 147.

This sequence belongs to the protease inhibitor I3 (leguminous Kunitz-type inhibitor) family.

Its function is as follows. Inhibitor of endogenous alpha-amylase (wheat also produces an exogenous inhibitor which inactivates alpha-amylase from animal and insect origin). This inhibitor can also inhibit subtilisin. This is Endogenous alpha-amylase/subtilisin inhibitor from Triticum aestivum (Wheat).